Consider the following 227-residue polypeptide: Cytochrome c oxidase subunit 2 (227 aa).

The Mitochondrial intermembrane portion of the chain corresponds to 1–14; it reads MAYPFQLGFQDATS. The helical transmembrane segment at 15 to 45 threads the bilayer; sequence PIMEELLHFHDHTLMIVFLISSLVLYIISSM. The Mitochondrial matrix portion of the chain corresponds to 46 to 59; sequence LTTKLTHTSTMDAQ. A helical transmembrane segment spans residues 60–87; that stretch reads EVETIWTILPAIILILIALPSLRILYMM. Over 88–227 the chain is Mitochondrial intermembrane; sequence DEINNPSLTV…YFEEWSASML (140 aa). Cu cation contacts are provided by H161, C196, E198, C200, H204, and M207. E198 serves as a coordination point for Mg(2+).

This sequence belongs to the cytochrome c oxidase subunit 2 family. In terms of assembly, component of the cytochrome c oxidase (complex IV, CIV), a multisubunit enzyme composed of 14 subunits. The complex is composed of a catalytic core of 3 subunits MT-CO1, MT-CO2 and MT-CO3, encoded in the mitochondrial DNA, and 11 supernumerary subunits COX4I, COX5A, COX5B, COX6A, COX6B, COX6C, COX7A, COX7B, COX7C, COX8 and NDUFA4, which are encoded in the nuclear genome. The complex exists as a monomer or a dimer and forms supercomplexes (SCs) in the inner mitochondrial membrane with NADH-ubiquinone oxidoreductase (complex I, CI) and ubiquinol-cytochrome c oxidoreductase (cytochrome b-c1 complex, complex III, CIII), resulting in different assemblies (supercomplex SCI(1)III(2)IV(1) and megacomplex MCI(2)III(2)IV(2)). Found in a complex with TMEM177, COA6, COX18, COX20, SCO1 and SCO2. Interacts with TMEM177 in a COX20-dependent manner. Interacts with COX20. Interacts with COX16. Cu cation serves as cofactor.

It localises to the mitochondrion inner membrane. The enzyme catalyses 4 Fe(II)-[cytochrome c] + O2 + 8 H(+)(in) = 4 Fe(III)-[cytochrome c] + 2 H2O + 4 H(+)(out). Component of the cytochrome c oxidase, the last enzyme in the mitochondrial electron transport chain which drives oxidative phosphorylation. The respiratory chain contains 3 multisubunit complexes succinate dehydrogenase (complex II, CII), ubiquinol-cytochrome c oxidoreductase (cytochrome b-c1 complex, complex III, CIII) and cytochrome c oxidase (complex IV, CIV), that cooperate to transfer electrons derived from NADH and succinate to molecular oxygen, creating an electrochemical gradient over the inner membrane that drives transmembrane transport and the ATP synthase. Cytochrome c oxidase is the component of the respiratory chain that catalyzes the reduction of oxygen to water. Electrons originating from reduced cytochrome c in the intermembrane space (IMS) are transferred via the dinuclear copper A center (CU(A)) of subunit 2 and heme A of subunit 1 to the active site in subunit 1, a binuclear center (BNC) formed by heme A3 and copper B (CU(B)). The BNC reduces molecular oxygen to 2 water molecules using 4 electrons from cytochrome c in the IMS and 4 protons from the mitochondrial matrix. This Equus asinus (Donkey) protein is Cytochrome c oxidase subunit 2 (MT-CO2).